Consider the following 795-residue polypeptide: Probable alpha,alpha-trehalose-phosphate synthase [UDP-forming] 4 (795 aa).

Residues 4 to 469 (PRLLVVSMSL…WADDFMKLTL (466 aa)) are glycosyltransferase.

The protein in the N-terminal section; belongs to the glycosyltransferase 20 family. It in the C-terminal section; belongs to the trehalose phosphatase family.

It catalyses the reaction D-glucose 6-phosphate + UDP-alpha-D-glucose = alpha,alpha-trehalose 6-phosphate + UDP + H(+). The sequence is that of Probable alpha,alpha-trehalose-phosphate synthase [UDP-forming] 4 (TPS4) from Arabidopsis thaliana (Mouse-ear cress).